The chain runs to 344 residues: S-adenosylmethionine:tRNA ribosyltransferase-isomerase (344 aa).

Belongs to the QueA family. As to quaternary structure, monomer.

Its subcellular location is the cytoplasm. It carries out the reaction 7-aminomethyl-7-carbaguanosine(34) in tRNA + S-adenosyl-L-methionine = epoxyqueuosine(34) in tRNA + adenine + L-methionine + 2 H(+). It participates in tRNA modification; tRNA-queuosine biosynthesis. Transfers and isomerizes the ribose moiety from AdoMet to the 7-aminomethyl group of 7-deazaguanine (preQ1-tRNA) to give epoxyqueuosine (oQ-tRNA). This chain is S-adenosylmethionine:tRNA ribosyltransferase-isomerase, found in Rhizorhabdus wittichii (strain DSM 6014 / CCUG 31198 / JCM 15750 / NBRC 105917 / EY 4224 / RW1) (Sphingomonas wittichii).